The following is a 467-amino-acid chain: uncharacterized protein (467 aa).

An N6-(pyridoxal phosphate)lysine modification is found at K290.

This sequence belongs to the class-III pyridoxal-phosphate-dependent aminotransferase family. The cofactor is pyridoxal 5'-phosphate.

This is an uncharacterized protein from Sinorhizobium fredii (strain NBRC 101917 / NGR234).